We begin with the raw amino-acid sequence, 450 residues long: NADP-specific glutamate dehydrogenase (450 aa).

Residue lysine 114 is part of the active site.

This sequence belongs to the Glu/Leu/Phe/Val dehydrogenases family. In terms of assembly, homohexamer.

It catalyses the reaction L-glutamate + NADP(+) + H2O = 2-oxoglutarate + NH4(+) + NADPH + H(+). This Botryotinia fuckeliana (Noble rot fungus) protein is NADP-specific glutamate dehydrogenase (gdhA).